The following is a 663-amino-acid chain: Chaperone protein HtpG (663 aa).

Positions 1–352 (MTKQTLSFQA…SADLPLNVSR (352 aa)) are a; substrate-binding. Basic and acidic residues predominate over residues 218 to 228 (ELINPSDEKGG). Positions 218–237 (ELINPSDEKGGRQPGGMVKT) are disordered. Positions 353–595 (ELLQESRDVK…DHGMSTQLAR (243 aa)) are b. The interval 596–663 (MLKQAGQAAP…YVKRVNALLV (68 aa)) is c.

The protein belongs to the heat shock protein 90 family. Homodimer.

The protein localises to the cytoplasm. Its function is as follows. Molecular chaperone. Has ATPase activity. The protein is Chaperone protein HtpG of Albidiferax ferrireducens (strain ATCC BAA-621 / DSM 15236 / T118) (Rhodoferax ferrireducens).